Reading from the N-terminus, the 325-residue chain is Ribonucleoside-diphosphate reductase subunit beta (325 aa).

Asp-73, Glu-104, and His-107 together coordinate Fe cation. Tyr-111 is a catalytic residue. Positions 164, 198, and 201 each coordinate Fe cation.

The protein belongs to the ribonucleoside diphosphate reductase small chain family. As to quaternary structure, tetramer of two alpha and two beta subunits. Fe cation serves as cofactor.

It carries out the reaction a 2'-deoxyribonucleoside 5'-diphosphate + [thioredoxin]-disulfide + H2O = a ribonucleoside 5'-diphosphate + [thioredoxin]-dithiol. In terms of biological role, provides the precursors necessary for DNA synthesis. Catalyzes the biosynthesis of deoxyribonucleotides from the corresponding ribonucleotides. The protein is Ribonucleoside-diphosphate reductase subunit beta (nrdF) of Mycobacterium leprae (strain TN).